The following is a 369-amino-acid chain: UPF0283 membrane protein RPA1583 (369 aa).

Residues 1–61 are disordered; sequence MTERVPPRRP…APPPPPPRAR (61 aa). Residues 34 to 51 show a composition bias toward low complexity; sequence AKPSAKADARPAASAAGA. 3 consecutive transmembrane segments (helical) span residues 90 to 110, 124 to 144, and 239 to 259; these read WGTV…WLWI, LGTI…IIIG, and VSLV…VAIA.

Belongs to the UPF0283 family.

It localises to the cell inner membrane. In Rhodopseudomonas palustris (strain ATCC BAA-98 / CGA009), this protein is UPF0283 membrane protein RPA1583.